Consider the following 190-residue polypeptide: Potassium-transporting ATPase KdpC subunit (190 aa).

A helical transmembrane segment spans residues 11 to 31 (LIVLMSLITGVAYPLVVTGVA).

The protein belongs to the KdpC family. The system is composed of three essential subunits: KdpA, KdpB and KdpC.

It localises to the cell inner membrane. Part of the high-affinity ATP-driven potassium transport (or Kdp) system, which catalyzes the hydrolysis of ATP coupled with the electrogenic transport of potassium into the cytoplasm. This subunit acts as a catalytic chaperone that increases the ATP-binding affinity of the ATP-hydrolyzing subunit KdpB by the formation of a transient KdpB/KdpC/ATP ternary complex. The sequence is that of Potassium-transporting ATPase KdpC subunit from Pseudomonas syringae pv. tomato (strain ATCC BAA-871 / DC3000).